Consider the following 2201-residue polypeptide: Voltage-dependent T-type calcium channel subunit alpha-1I (2201 aa).

Residues 1-45 form a disordered region; it reads MADSNLPPSSAAAPAPEPGITEQPGPRSPPPSPPGLEEPLEGTNP. At 1 to 76 the chain is on the cytoplasmic side; it reads MADSNLPPSS…RNWCIKMVCN (76 aa). Positions 26-36 are enriched in pro residues; it reads PRSPPPSPPGL. Residues 64 to 399 form an I repeat; the sequence is TSPRNWCIKM…LCLVVIATQF (336 aa). The helical transmembrane segment at 77–97 threads the bilayer; that stretch reads PWFECVSMLVILLNCVTLGMY. The Extracellular segment spans residues 98–115; that stretch reads QPCDDMECLSDRCKILQV. The helical transmembrane segment at 116 to 137 threads the bilayer; the sequence is FDDFIFIFFAMEMVLKMVALGI. Over 138–146 the chain is Cytoplasmic; sequence FGKKCYLGD. The chain crosses the membrane as a helical span at residues 147–166; that stretch reads TWNRLDFFIVMAGMVEYSLD. Residues 167–171 are Extracellular-facing; it reads LQNIN. An N-linked (GlcNAc...) asparagine glycan is attached at N171. The chain crosses the membrane as a helical span at residues 172-189; sequence LSAIRTVRVLRPLKAINR. At 190–209 the chain is on the cytoplasmic side; sequence VPSMRILVNLLLDTLPMLGN. The chain crosses the membrane as a helical span at residues 210–230; the sequence is VLLLCFFVFFIFGIIGVQLWA. At 231 to 371 the chain is on the extracellular side; that stretch reads GLLRNRCFLE…YYVMDAHSFY (141 aa). Residues N242 and N309 are each glycosylated (N-linked (GlcNAc...) asparagine). The helical transmembrane segment at 372-396 threads the bilayer; it reads NFIYFILLIIVGSFFMINLCLVVIA. Residues 397-598 are Cytoplasmic-facing; the sequence is TQFSETKQRE…EKLRGIVDSK (202 aa). Disordered regions lie at residues 463–500 and 513–579; these read QAMG…TPHT and PSSC…AARL. Positions 545 to 554 are enriched in low complexity; the sequence is SAEAEANGDG. One copy of the II repeat lies at 584 to 823; that stretch reads WRETREKLRG…LLVAILVEGF (240 aa). A helical transmembrane segment spans residues 599–619; the sequence is YFNRGIMMAILVNTVSMGIEH. Residues 620 to 632 are Extracellular-facing; the sequence is HEQPEELTNILEI. The helical transmembrane segment at 633–654 threads the bilayer; the sequence is CNVVFTSMFALEMILKLAAFGL. Residues 655–660 are Cytoplasmic-facing; the sequence is FDYLRN. Residues 661–679 traverse the membrane as a helical segment; it reads PYNIFDSIIVIISIWEIVG. The Extracellular portion of the chain corresponds to 680–687; it reads QADGGLSV. The chain crosses the membrane as a helical span at residues 688–711; it reads LRTFRLLRVLKLVRFMPALRRQLV. Residues 712–722 lie on the Cytoplasmic side of the membrane; sequence VLMKTMDNVAT. Residues 723-743 form a helical membrane-spanning segment; sequence FCMLLMLFIFIFSILGMHIFG. At 744-795 the chain is on the extracellular side; that stretch reads CKFSLRTDTGDTVPDRKNFDSLLWAIVTVFQILTQEDWNVVLYNGMASTTPW. Residues 796 to 820 form a helical membrane-spanning segment; it reads ASLYFVALMTFGNYVLFNLLVAILV. At 821 to 1125 the chain is on the cytoplasmic side; the sequence is EGFQAEGDAN…NKFRILCQTI (305 aa). Residues 936-969 are disordered; it reads WGRSGTWASRRSSWNSLKHKPPSAEHESLLSGEG. Polar residues predominate over residues 941–951; it reads TWASRRSSWNS. Phosphoserine is present on S1017. The stretch at 1116–1393 is one III repeat; it reads NKFRILCQTI…MFVGVVVENF (278 aa). The chain crosses the membrane as a helical span at residues 1126 to 1148; the sequence is IAHKLFDYVVLAFIFLNCITIAL. Topologically, residues 1149–1166 are extracellular; that stretch reads ERPQIEAGSTERIFLTVS. The helical transmembrane segment at 1167-1187 threads the bilayer; that stretch reads NYIFTAIFVGEMTLKVVSLGL. Residues 1188–1197 are Cytoplasmic-facing; sequence YFGEQAYLRS. Residues 1198–1217 traverse the membrane as a helical segment; that stretch reads SWNVLDGFLVFVSIIDIVVS. At 1218–1231 the chain is on the extracellular side; the sequence is VASAGGAKILGVLR. Residues 1232–1253 traverse the membrane as a helical segment; it reads VLRLLRTLRPLRVISRAPGLKL. The Cytoplasmic segment spans residues 1254-1263; that stretch reads VVETLISSLK. Residues 1264–1287 form a helical membrane-spanning segment; sequence PIGNIVLICCAFFIIFGILGVQLF. The Extracellular portion of the chain corresponds to 1288–1364; the sequence is KGKFYHCLGV…DQQPVTNHNP (77 aa). N-linked (GlcNAc...) asparagine glycans are attached at residues N1301 and N1304. Residues 1365-1390 form a helical membrane-spanning segment; sequence WMLLYFISFLLIVSFFVLNMFVGVVV. Topologically, residues 1391-1445 are cytoplasmic; sequence ENFHKCRQHQEAEEARRREEKRLRRLEKKRRKAQRLPYYATYCPTRLLIHSMCTS. The IV repeat unit spans residues 1431-1692; it reads TYCPTRLLIH…VVVAVLMKHL (262 aa). Residues 1446 to 1466 traverse the membrane as a helical segment; the sequence is HYLDIFITFIICLNVVTMSLE. The Extracellular segment spans residues 1467 to 1480; that stretch reads HYNQPTSLETALKY. Residues 1481 to 1502 form a helical membrane-spanning segment; sequence CNYMFTTVFVLEAVLKLVAFGL. Residues 1503–1509 lie on the Cytoplasmic side of the membrane; that stretch reads RRFFKDR. Residues 1510–1528 form a helical membrane-spanning segment; that stretch reads WNQLDLAIVLLSVMGITLE. Residues 1529 to 1542 lie on the Extracellular side of the membrane; the sequence is EIEINAALPINPTI. Residues 1543 to 1566 form a helical membrane-spanning segment; sequence IRIMRVLRIARVLKLLKMATGMRA. Residues 1567-1580 lie on the Cytoplasmic side of the membrane; the sequence is LLDTVVQALPQVGN. Residues 1581 to 1601 form a helical membrane-spanning segment; sequence LGLLFMLLFFIYAALGVELFG. The Extracellular portion of the chain corresponds to 1602–1664; sequence KLVCNDENPC…RSCLSSLQFV (63 aa). The helical transmembrane segment at 1665–1692 threads the bilayer; it reads SPLYFVSFVLTAQFVLINVVVAVLMKHL. The Cytoplasmic segment spans residues 1693–1835; that stretch reads DDSNKEAQED…EVQLAETEAF (143 aa). Disordered regions lie at residues 1846–1876, 1916–1938, 1992–2045, 2057–2105, and 2126–2201; these read LLGD…PEPM, LKHD…PLLQ, SDTS…TRRR, RGLR…HSET, and LTPA…KRKR. The span at 1992 to 2007 shows a compositional bias: low complexity; it reads SDTSLDASPSSSAGSL. 2 stretches are compositionally biased toward polar residues: residues 2008–2019 and 2066–2075; these read QTTLEDSLTLSD and HSSGGSTSPG. Residues 2077-2090 are compositionally biased toward basic and acidic residues; that stretch reads THHDSMDPSDEEGR.

This sequence belongs to the calcium channel alpha-1 subunit (TC 1.A.1.11) family. CACNA1I subfamily. As to quaternary structure, interacts with CATSPER1 and CATSPER2, leading to suppress T-type calcium channel activity. Post-translationally, in response to raising of intracellular calcium, the T-type channels are activated by CaM-kinase II. In terms of tissue distribution, brain.

The protein resides in the membrane. The catalysed reaction is Ca(2+)(in) = Ca(2+)(out). In terms of biological role, voltage-sensitive calcium channels (VSCC) mediate the entry of calcium ions into excitable cells and are also involved in a variety of calcium-dependent processes, including muscle contraction, hormone or neurotransmitter release, gene expression, cell motility, cell division and cell death. This channel gives rise to T-type calcium currents. T-type calcium channels belong to the 'low-voltage activated (LVA)' group and are strongly blocked by nickel and mibefradil. A particularity of this type of channels is an opening at quite negative potentials, and a voltage-dependent inactivation. T-type channels serve pacemaking functions in both central neurons and cardiac nodal cells and support calcium signaling in secretory cells and vascular smooth muscle. They may also be involved in the modulation of firing patterns of neurons which is important for information processing as well as in cell growth processes. Gates in voltage ranges similar to, but higher than alpha 1G or alpha 1H. Its function is as follows. Voltage-sensitive calcium channels (VSCC) mediate the entry of calcium ions into excitable cells and are also involved in a variety of calcium-dependent processes, including muscle contraction, hormone or neurotransmitter release, gene expression, cell motility, cell division and cell death. This channel gives rise to T-type calcium currents. This chain is Voltage-dependent T-type calcium channel subunit alpha-1I (Cacna1i), found in Rattus norvegicus (Rat).